Consider the following 306-residue polypeptide: N-acetylmuramic acid 6-phosphate etherase (306 aa).

An SIS domain is found at 59 to 222 (ISEALRQGGR…STGAMVQLGK (164 aa)). The active-site Proton donor is Glu-87. Glu-118 is an active-site residue.

This sequence belongs to the GCKR-like family. MurNAc-6-P etherase subfamily. In terms of assembly, homodimer.

The enzyme catalyses N-acetyl-D-muramate 6-phosphate + H2O = N-acetyl-D-glucosamine 6-phosphate + (R)-lactate. It participates in amino-sugar metabolism; N-acetylmuramate degradation. In terms of biological role, specifically catalyzes the cleavage of the D-lactyl ether substituent of MurNAc 6-phosphate, producing GlcNAc 6-phosphate and D-lactate. The protein is N-acetylmuramic acid 6-phosphate etherase of Gloeothece citriformis (strain PCC 7424) (Cyanothece sp. (strain PCC 7424)).